A 199-amino-acid polypeptide reads, in one-letter code: Probable nicotinate-nucleotide adenylyltransferase (199 aa).

This sequence belongs to the NadD family.

It catalyses the reaction nicotinate beta-D-ribonucleotide + ATP + H(+) = deamido-NAD(+) + diphosphate. It participates in cofactor biosynthesis; NAD(+) biosynthesis; deamido-NAD(+) from nicotinate D-ribonucleotide: step 1/1. Its function is as follows. Catalyzes the reversible adenylation of nicotinate mononucleotide (NaMN) to nicotinic acid adenine dinucleotide (NaAD). This is Probable nicotinate-nucleotide adenylyltransferase from Rhizobium johnstonii (strain DSM 114642 / LMG 32736 / 3841) (Rhizobium leguminosarum bv. viciae).